A 231-amino-acid polypeptide reads, in one-letter code: Endonuclease NucS (231 aa).

The protein belongs to the NucS endonuclease family.

It localises to the cytoplasm. In terms of biological role, cleaves both 3' and 5' ssDNA extremities of branched DNA structures. This is Endonuclease NucS from Arthrobacter sp. (strain FB24).